The chain runs to 835 residues: uncharacterized protein (835 aa).

This is an uncharacterized protein from Mycoplasma genitalium (strain ATCC 33530 / DSM 19775 / NCTC 10195 / G37) (Mycoplasmoides genitalium).